The following is a 477-amino-acid chain: MTSDQSLSHHEPLPLERLGRTHFVGVGGGGMSGIARIFLSRGVPVSGCDARESRVLAALRAFGARVTVGHDPAHLSDVDTVVASTAVPPTTPELAVARERGLPVLPRAAALASVMAGRRGVAVAGTHGKTTTTSMVVRALQRCGADPSFAIGADLGEPGSNAHDGTGSIFVAEADESDESFLLLPFHAAVVTNVEADHLNHYADLAAIHAAFDRFVAKVPDGGFLVACTDDPGAEEIASRAARRGTVVRRYGTSPRADVRLVDLRLEVAGSRFAVAMDGTVLGELQLRVPGAHNALNATAAVAVTVGLGFPFSEVAEGLADFTGARRRFQPQGEVAGIRVFDDYAHHPTEIAATLRAARVVADGGRLVVAFQPHHYYRTADFRTEFGAALALADEVVVMEVYAPGETPLPGGTGAALAAAVPLPGSAVVFEPSWSAVPEHLAARARPGDLIVTMGAGGDVALLPPLVLDALRRRWQG.

125–131 (GTHGKTT) contacts ATP.

It belongs to the MurCDEF family.

Its subcellular location is the cytoplasm. The catalysed reaction is UDP-N-acetyl-alpha-D-muramate + L-alanine + ATP = UDP-N-acetyl-alpha-D-muramoyl-L-alanine + ADP + phosphate + H(+). Its pathway is cell wall biogenesis; peptidoglycan biosynthesis. Functionally, cell wall formation. The polypeptide is UDP-N-acetylmuramate--L-alanine ligase (Acidothermus cellulolyticus (strain ATCC 43068 / DSM 8971 / 11B)).